The primary structure comprises 221 residues: NAD(P)H-hydrate epimerase (221 aa).

A YjeF N-terminal domain is found at 10 to 211 (MQQYDQYTIN…DIGIYSPAEL (202 aa)). (6S)-NADPHX is bound at residue 58–62 (NNGGD). N59 and D121 together coordinate K(+). (6S)-NADPHX-binding positions include 125 to 131 (GIGLSKP) and D154. S157 is a binding site for K(+).

This sequence belongs to the NnrE/AIBP family. K(+) is required as a cofactor.

The enzyme catalyses (6R)-NADHX = (6S)-NADHX. The catalysed reaction is (6R)-NADPHX = (6S)-NADPHX. Catalyzes the epimerization of the S- and R-forms of NAD(P)HX, a damaged form of NAD(P)H that is a result of enzymatic or heat-dependent hydration. This is a prerequisite for the S-specific NAD(P)H-hydrate dehydratase to allow the repair of both epimers of NAD(P)HX. This chain is NAD(P)H-hydrate epimerase, found in Weissella koreensis (strain KACC 15510).